The primary structure comprises 54 residues: Snake venom 5'-nucleotidase (54 aa).

Residues Asp11 and His13 each contribute to the Zn(2+) site. Asn46 carries an N-linked (GlcNAc...) asparagine glycan.

This sequence belongs to the 5'-nucleotidase family. The cofactor is Zn(2+). Post-translationally, venom 5'-nucleotidases (or a part thereof) may be released into the venom via exosome-like vesicles. They may be attached via a GPI anchor to the membrane of these vesicles. Soluble forms of 5'-nucleotidase might be released by cleavage of the ectodomain in the exosome-like vesicles or venom gland cells. In terms of tissue distribution, expressed by the venom gland.

It localises to the membrane. It carries out the reaction a ribonucleoside 5'-phosphate + H2O = a ribonucleoside + phosphate. Hydrolyzes nucleotides into nucleosides. Snake venom 5'-nucleotidases are widely distributed among venomous snake taxa, but there is a lack of information about their biological activities. They have been shown to inhibit platelet aggregation. This effect may be due to the liberation of inhibitory AMP or adenosine by its action on ADP released upon initiation of aggregation. Venom 5'-nucleotidases are also known to synergistically act in vivo with other toxins like ADPases, phospholipases, and disintegrins to exert a more pronounced anti-coagulant effect. This Gloydius blomhoffii blomhoffii (Japanese mamushi) protein is Snake venom 5'-nucleotidase.